A 101-amino-acid chain; its full sequence is MKQVLTWLVRGYQRFISPLLPPSCRYYPTCSTYMIQALQKHGAIKGSLMGIARILRCNPFVKGGLDPVPAFFTLRRNPHPENDLDLSDIQNLNHKLGGRHG.

It belongs to the UPF0161 family.

The protein localises to the cell membrane. Could be involved in insertion of integral membrane proteins into the membrane. The sequence is that of Putative membrane protein insertion efficiency factor from Lacticaseibacillus casei (strain BL23) (Lactobacillus casei).